Reading from the N-terminus, the 426-residue chain is Serine--tRNA ligase (426 aa).

Position 229–231 (229–231 (TAE)) interacts with L-serine. Residues 260 to 262 (RTE) and valine 276 each bind ATP. Residue glutamate 283 participates in L-serine binding. Residue 350-353 (EVTS) coordinates ATP. Threonine 386 contributes to the L-serine binding site.

This sequence belongs to the class-II aminoacyl-tRNA synthetase family. Type-1 seryl-tRNA synthetase subfamily. As to quaternary structure, homodimer. The tRNA molecule binds across the dimer.

The protein localises to the cytoplasm. The catalysed reaction is tRNA(Ser) + L-serine + ATP = L-seryl-tRNA(Ser) + AMP + diphosphate + H(+). The enzyme catalyses tRNA(Sec) + L-serine + ATP = L-seryl-tRNA(Sec) + AMP + diphosphate + H(+). Its pathway is aminoacyl-tRNA biosynthesis; selenocysteinyl-tRNA(Sec) biosynthesis; L-seryl-tRNA(Sec) from L-serine and tRNA(Sec): step 1/1. Functionally, catalyzes the attachment of serine to tRNA(Ser). Is also able to aminoacylate tRNA(Sec) with serine, to form the misacylated tRNA L-seryl-tRNA(Sec), which will be further converted into selenocysteinyl-tRNA(Sec). The polypeptide is Serine--tRNA ligase (Rhodopirellula baltica (strain DSM 10527 / NCIMB 13988 / SH1)).